The primary structure comprises 129 residues: Small ribosomal subunit protein uS11 (129 aa).

It belongs to the universal ribosomal protein uS11 family. As to quaternary structure, part of the 30S ribosomal subunit. Interacts with proteins S7 and S18. Binds to IF-3.

In terms of biological role, located on the platform of the 30S subunit, it bridges several disparate RNA helices of the 16S rRNA. Forms part of the Shine-Dalgarno cleft in the 70S ribosome. This Beijerinckia indica subsp. indica (strain ATCC 9039 / DSM 1715 / NCIMB 8712) protein is Small ribosomal subunit protein uS11.